The chain runs to 427 residues: MSSIVDVIAREILDSRGNPTVEADVLLESGVMGRAAVPSGASTGTREAIELRDGDASRYLGKGVMQAVENVNTEISEAIIGLDAQEQAFIDQTMIDLDGTDNKSRLGANAILAVSMAVAKAAAEESGLPLYRYFGGMSPMQMPVPMMNIINGGEHANNSLDIQEFMVMPVGAANIREAIRCGAEIFHALKKLLNKKGHSTAVGDEGGFAPNLGSHAEALQIIMEAIEIAGYVPGQDVLLALDCAASEFYKDGKYKLAGEGLELTSAQFVDYLANLADQFPIVSIEDGMSEADWDGWKLLTDRLGDKVQIVGDDIFVTNTKIFKEGIKKGIGNSILIKINQIGTLSETFAAVEMAKRAGYTAVISHRSGETEDSTIADIAVGLNAGQIKTGSLSRSDRIAKYNQLIRIEEDLGDTASYPGRETFYNLR.

Position 163 (Gln163) interacts with (2R)-2-phosphoglycerate. Glu205 serves as the catalytic Proton donor. Mg(2+)-binding residues include Asp242, Glu285, and Asp312. (2R)-2-phosphoglycerate contacts are provided by Lys337, Arg366, Ser367, and Lys388. The active-site Proton acceptor is the Lys337.

It belongs to the enolase family. Requires Mg(2+) as cofactor.

The protein resides in the cytoplasm. The protein localises to the secreted. Its subcellular location is the cell surface. The enzyme catalyses (2R)-2-phosphoglycerate = phosphoenolpyruvate + H2O. Its pathway is carbohydrate degradation; glycolysis; pyruvate from D-glyceraldehyde 3-phosphate: step 4/5. Functionally, catalyzes the reversible conversion of 2-phosphoglycerate (2-PG) into phosphoenolpyruvate (PEP). It is essential for the degradation of carbohydrates via glycolysis. The chain is Enolase from Dechloromonas aromatica (strain RCB).